The primary structure comprises 186 residues: Elongation factor P (186 aa).

It belongs to the elongation factor P family.

It is found in the cytoplasm. Its pathway is protein biosynthesis; polypeptide chain elongation. Functionally, involved in peptide bond synthesis. Stimulates efficient translation and peptide-bond synthesis on native or reconstituted 70S ribosomes in vitro. Probably functions indirectly by altering the affinity of the ribosome for aminoacyl-tRNA, thus increasing their reactivity as acceptors for peptidyl transferase. The sequence is that of Elongation factor P from Streptococcus pneumoniae (strain Hungary19A-6).